A 100-amino-acid polypeptide reads, in one-letter code: MICOS complex subunit MIC12 (100 aa).

A helical membrane pass occupies residues 10 to 26 (FATISSVAAASLYLYAI).

It belongs to the MICOS complex subunit Mic12 family. Component of the mitochondrial contact site and cristae organizing system (MICOS) complex.

The protein resides in the mitochondrion inner membrane. Functionally, component of the MICOS complex, a large protein complex of the mitochondrial inner membrane that plays crucial roles in the maintenance of crista junctions, inner membrane architecture, and formation of contact sites to the outer membrane. The protein is MICOS complex subunit MIC12 (AIM5) of Vanderwaltozyma polyspora (strain ATCC 22028 / DSM 70294 / BCRC 21397 / CBS 2163 / NBRC 10782 / NRRL Y-8283 / UCD 57-17) (Kluyveromyces polysporus).